The chain runs to 2219 residues: RNA-directed RNA polymerase L (2219 aa).

The tract at residues 26 to 289 is endonuclease; it reads KLAFLVQTEP…TTEDDVEYLI (264 aa). Glu-51, Asp-89, and Glu-102 together coordinate Mn(2+). Lys-115 is a catalytic residue. Residues 1177–1373 enclose the RdRp catalytic domain; that stretch reads LSMKLNVSLA…YMSDQLNKFV (197 aa). Mg(2+) is bound at residue Asp-1335.

It belongs to the Bunyavirales RNA polymerase family. In terms of assembly, homomultimer; the oligomeric structure is essential for the polymerase activity. Interacts with nucleoprotein N. Interacts with protein Z; this interaction inhibits viral transcription and replication, Z partially blocks the product exit tunnel for the releasing nascent RNA product. Mn(2+) is required as a cofactor. Requires Mg(2+) as cofactor.

Its subcellular location is the virion. It is found in the host cytoplasm. It carries out the reaction RNA(n) + a ribonucleoside 5'-triphosphate = RNA(n+1) + diphosphate. RNA-dependent RNA polymerase, which is responsible for the replication and transcription of the viral RNA genome using antigenomic RNA as an intermediate. During transcription, synthesizes subgenomic RNAs and assures their capping by a cap-snatching mechanism, which involves the endonuclease activity cleaving the host capped pre-mRNAs. These short capped RNAs are then used as primers for viral transcription. The 3'-end of subgenomic mRNAs molecules are heterogeneous and not polyadenylated. The replicase function is to direct synthesis of antigenomic and genomic RNA which are encapsidated and non capped. As a consequence of the use of the same enzyme for both transcription and replication, these mechanisms need to be well coordinated. These processes may be regulated by proteins N and Z in a dose-dependent manner. Z protein inhibits the viral polymerase L und thus the viral transcription and RNA synthesis. This chain is RNA-directed RNA polymerase L, found in Homo sapiens (Human).